The chain runs to 295 residues: Small ribosomal subunit protein uS2 (295 aa).

Belongs to the universal ribosomal protein uS2 family. Component of the small ribosomal subunit. Mature ribosomes consist of a small (40S) and a large (60S) subunit. The 40S subunit contains about 33 different proteins and 1 molecule of RNA (18S). The 60S subunit contains about 49 different proteins and 3 molecules of RNA (25S, 5.8S and 5S). Interacts with RPS21.

It localises to the cytoplasm. Required for the assembly and/or stability of the 40S ribosomal subunit. Required for the processing of the 20S rRNA-precursor to mature 18S rRNA in a late step of the maturation of 40S ribosomal subunits. The polypeptide is Small ribosomal subunit protein uS2 (Paracoccidioides brasiliensis (strain Pb18)).